A 110-amino-acid chain; its full sequence is Protein mistic (110 aa).

Residues 1–7 (MFCTFFE) lie on the Cytoplasmic side of the membrane. A helical transmembrane segment spans residues 8–22 (KHHRKWDILLEKSTG). At 23–31 (VMEAMKVTS) the chain is on the extracellular side. The chain crosses the membrane as a helical span at residues 32–55 (EEKEQLSTAIDRMNEGLDAFIQLY). The Cytoplasmic portion of the chain corresponds to 56–66 (NESEIDEPLIQ). The chain crosses the membrane as a helical span at residues 67-81 (LDDDTAELMKQARDM). The Extracellular segment spans residues 82–88 (YGQEKLN). A helical membrane pass occupies residues 89 to 102 (EKLNTIIKQILSIS). At 103 to 110 (VSEEGEKE) the chain is on the cytoplasmic side.

As to quaternary structure, monomer.

The protein resides in the cell membrane. Functionally, chaperone that facilitates the production and integration of integral membrane proteins into the bacterial lipid bilayer. This chain is Protein mistic (mstX), found in Bacillus subtilis (strain 168).